We begin with the raw amino-acid sequence, 345 residues long: Phosphoribosylformylglycinamidine cyclo-ligase (345 aa).

It belongs to the AIR synthase family.

It localises to the cytoplasm. It carries out the reaction 2-formamido-N(1)-(5-O-phospho-beta-D-ribosyl)acetamidine + ATP = 5-amino-1-(5-phospho-beta-D-ribosyl)imidazole + ADP + phosphate + H(+). Its pathway is purine metabolism; IMP biosynthesis via de novo pathway; 5-amino-1-(5-phospho-D-ribosyl)imidazole from N(2)-formyl-N(1)-(5-phospho-D-ribosyl)glycinamide: step 2/2. The sequence is that of Phosphoribosylformylglycinamidine cyclo-ligase from Shewanella woodyi (strain ATCC 51908 / MS32).